Consider the following 377-residue polypeptide: Queuine tRNA-ribosyltransferase (377 aa).

The Proton acceptor role is filled by Asp-91. Substrate is bound by residues 91–95, Asp-145, Gln-189, and Gly-216; that span reads DSGGF. The interval 247-253 is RNA binding; sequence GVGKPED. The active-site Nucleophile is the Asp-266. The interval 271–275 is RNA binding; important for wobble base 34 recognition; sequence TRNAR. Zn(2+)-binding residues include Cys-304, Cys-306, Cys-309, and His-335.

This sequence belongs to the queuine tRNA-ribosyltransferase family. As to quaternary structure, homodimer. Within each dimer, one monomer is responsible for RNA recognition and catalysis, while the other monomer binds to the replacement base PreQ1. Zn(2+) serves as cofactor.

It carries out the reaction 7-aminomethyl-7-carbaguanine + guanosine(34) in tRNA = 7-aminomethyl-7-carbaguanosine(34) in tRNA + guanine. The protein operates within tRNA modification; tRNA-queuosine biosynthesis. Its function is as follows. Catalyzes the base-exchange of a guanine (G) residue with the queuine precursor 7-aminomethyl-7-deazaguanine (PreQ1) at position 34 (anticodon wobble position) in tRNAs with GU(N) anticodons (tRNA-Asp, -Asn, -His and -Tyr). Catalysis occurs through a double-displacement mechanism. The nucleophile active site attacks the C1' of nucleotide 34 to detach the guanine base from the RNA, forming a covalent enzyme-RNA intermediate. The proton acceptor active site deprotonates the incoming PreQ1, allowing a nucleophilic attack on the C1' of the ribose to form the product. After dissociation, two additional enzymatic reactions on the tRNA convert PreQ1 to queuine (Q), resulting in the hypermodified nucleoside queuosine (7-(((4,5-cis-dihydroxy-2-cyclopenten-1-yl)amino)methyl)-7-deazaguanosine). The sequence is that of Queuine tRNA-ribosyltransferase from Vibrio parahaemolyticus serotype O3:K6 (strain RIMD 2210633).